A 329-amino-acid chain; its full sequence is Transposable element Tc3 transposase (329 aa).

The DNA-binding element occupies proline 2–threonine 135.

Belongs to the transposase 5 family. Homodimer or homotetramer.

The protein localises to the nucleus. In terms of biological role, binds specifically to the terminal nucleotides of the TC3 inverted repeat. Its expression results in frequent excision and transposition of endogenous TC3 elements. TC3 transposase acts by making double strand breaks at the ends of TC3 element. The excised element would then be inserted into a target sequence. This Caenorhabditis elegans protein is Transposable element Tc3 transposase (tc3a).